A 630-amino-acid chain; its full sequence is Auxin efflux carrier component 2 (630 aa).

At 1–6 (MITGRD) the chain is on the extracellular side. A helical transmembrane segment spans residues 7–27 (IYDVLAAIVPLYVAMFLAYGS). Topologically, residues 28 to 38 (VRWWGIFTPDQ) are cytoplasmic. The helical transmembrane segment at 39-59 (CSGINRFVAVFAVPLLSFHFI) threads the bilayer. V51 serves as a coordination point for (indol-3-yl)acetate. Residues 60–70 (STNDPYSMNYR) are Extracellular-facing. The helical transmembrane segment at 71 to 91 (FLAADSLQKLVILAALAVWHN) threads the bilayer. At 92 to 108 (LLSRYRRNGGAAASLDW) the chain is on the cytoplasmic side. A helical transmembrane segment spans residues 109 to 129 (TITLFSLSTLPNTLVMGIPLL). Positions 120 and 122 each coordinate (indol-3-yl)acetate. At 130–139 (RAMYGDFSGS) the chain is on the extracellular side. The chain crosses the membrane as a helical span at residues 140–160 (LMVQIVVLQSVIWYTLMLFLF). Y153 contacts (indol-3-yl)acetate. Residues 161–490 (EYRGAKALIS…LIRNPNTYSS (330 aa)) lie on the Cytoplasmic side of the membrane. The interval 317 to 350 (ASGKAADPPSYPAPNPGMMPAPRKKELGGSNSNS) is disordered. Residues 325-335 (PSYPAPNPGMM) show a composition bias toward pro residues. A helical membrane pass occupies residues 491–511 (LIGLVWSLVSFRWNIQMPSII). Residues 512–514 (KGS) lie on the Extracellular side of the membrane. The helical transmembrane segment at 515–535 (ISILSDAGLGMAMFSLGLFMA) threads the bilayer. Residues 536-549 (LQPKIISCGKTVAT) lie on the Cytoplasmic side of the membrane. Residues 550–570 (FAMAVRFLTGPAVIAATSIAI) traverse the membrane as a helical segment. At 571–574 (GLRG) the chain is on the extracellular side. Residues 575–595 (VLLHVAIVQAALPQGIVPFVF) traverse the membrane as a helical segment. (indol-3-yl)acetate contacts are provided by I590 and V591. At 596-609 (AKEYNCHPQILSTA) the chain is on the cytoplasmic side. The chain crosses the membrane as a helical span at residues 610–630 (VIFGMLIALPITILYYVLLGI).

The protein belongs to the auxin efflux carrier (TC 2.A.69.1) family. As to quaternary structure, homodimer. In terms of tissue distribution, expressed in roots, leaves, shoot apex and panicles. Expressed in roots, stem bases and young panicles.

The protein resides in the membrane. Functionally, acts as a component of the auxin efflux carrier. Involved in the basipetal polar auxin transport which contributes to the spreading growth of the tillers. This Oryza sativa subsp. japonica (Rice) protein is Auxin efflux carrier component 2.